The primary structure comprises 161 residues: Large ribosomal subunit protein uL16 (161 aa).

Positions Leu-140–Ser-161 are disordered.

It belongs to the universal ribosomal protein uL16 family. As to quaternary structure, part of the 50S ribosomal subunit.

Binds 23S rRNA and is also seen to make contacts with the A and possibly P site tRNAs. The protein is Large ribosomal subunit protein uL16 of Prochlorococcus marinus (strain NATL1A).